The chain runs to 417 residues: Gamma-glutamyl phosphate reductase (417 aa).

Belongs to the gamma-glutamyl phosphate reductase family.

The protein resides in the cytoplasm. The catalysed reaction is L-glutamate 5-semialdehyde + phosphate + NADP(+) = L-glutamyl 5-phosphate + NADPH + H(+). Its pathway is amino-acid biosynthesis; L-proline biosynthesis; L-glutamate 5-semialdehyde from L-glutamate: step 2/2. Catalyzes the NADPH-dependent reduction of L-glutamate 5-phosphate into L-glutamate 5-semialdehyde and phosphate. The product spontaneously undergoes cyclization to form 1-pyrroline-5-carboxylate. The sequence is that of Gamma-glutamyl phosphate reductase from Aeromonas salmonicida (strain A449).